Here is a 342-residue protein sequence, read N- to C-terminus: Dihydroorotase (342 aa).

Positions 13 and 15 each coordinate Zn(2+). Residues 15-17 (HLR) and asparagine 41 contribute to the substrate site. The Zn(2+) site is built by lysine 99, histidine 136, and histidine 174. Residue lysine 99 is modified to N6-carboxylysine. Position 136 (histidine 136) interacts with substrate. Residue leucine 218 participates in substrate binding. Aspartate 246 provides a ligand contact to Zn(2+). Aspartate 246 is an active-site residue. 2 residues coordinate substrate: histidine 250 and alanine 262.

The protein belongs to the metallo-dependent hydrolases superfamily. DHOase family. Class II DHOase subfamily. Homodimer. Requires Zn(2+) as cofactor.

It carries out the reaction (S)-dihydroorotate + H2O = N-carbamoyl-L-aspartate + H(+). It participates in pyrimidine metabolism; UMP biosynthesis via de novo pathway; (S)-dihydroorotate from bicarbonate: step 3/3. Catalyzes the reversible cyclization of carbamoyl aspartate to dihydroorotate. This chain is Dihydroorotase, found in Synechocystis sp. (strain ATCC 27184 / PCC 6803 / Kazusa).